A 404-amino-acid polypeptide reads, in one-letter code: RING-H2 finger protein ATL11 (404 aa).

Positions 1–36 are cleaved as a signal peptide; it reads MNPKGRTNLNRSIIGGHDHGSILQLLLFLLLLSSHG. The chain crosses the membrane as a helical span at residues 64–84; it reads AILMIVLVSVFFFLGFFSVYI. The segment at 144 to 186 adopts an RING-type; atypical zinc-finger fold; it reads CSVCLNEFEDDETLRLIPKCCHVFHPGCIDAWLRSHTTCPLCR. Disordered stretches follow at residues 339 to 361 and 385 to 404; these read PYRTSSINHMSPGGSGGDKVRAS and VGENSSDHLRSCDATPSNTV.

Belongs to the RING-type zinc finger family. ATL subfamily.

The protein localises to the membrane. The catalysed reaction is S-ubiquitinyl-[E2 ubiquitin-conjugating enzyme]-L-cysteine + [acceptor protein]-L-lysine = [E2 ubiquitin-conjugating enzyme]-L-cysteine + N(6)-ubiquitinyl-[acceptor protein]-L-lysine.. Its pathway is protein modification; protein ubiquitination. The protein is RING-H2 finger protein ATL11 (ATL11) of Arabidopsis thaliana (Mouse-ear cress).